The following is a 206-amino-acid chain: Thymidylate kinase (206 aa).

7–14 (GGEGVGKT) contacts ATP.

This sequence belongs to the thymidylate kinase family.

The catalysed reaction is dTMP + ATP = dTDP + ADP. In terms of biological role, phosphorylation of dTMP to form dTDP in both de novo and salvage pathways of dTTP synthesis. The sequence is that of Thymidylate kinase from Synechococcus sp. (strain JA-2-3B'a(2-13)) (Cyanobacteria bacterium Yellowstone B-Prime).